A 343-amino-acid chain; its full sequence is Protein RecA (343 aa).

66–73 is an ATP binding site; it reads GPESSGKT. The segment at 319 to 343 is disordered; sequence IERQIREKHLPKRSAKADEAESAEA.

The protein belongs to the RecA family.

The protein localises to the cytoplasm. Can catalyze the hydrolysis of ATP in the presence of single-stranded DNA, the ATP-dependent uptake of single-stranded DNA by duplex DNA, and the ATP-dependent hybridization of homologous single-stranded DNAs. It interacts with LexA causing its activation and leading to its autocatalytic cleavage. In Thioalkalivibrio sulfidiphilus (strain HL-EbGR7), this protein is Protein RecA.